A 115-amino-acid chain; its full sequence is U3-lycotoxin-Ls1j (115 aa).

The first 20 residues, M1–A20, serve as a signal peptide directing secretion. Positions E21–R44 are excised as a propeptide. 4 cysteine pairs are disulfide-bonded: C48–C63, C55–C72, C62–C87, and C74–C85.

Belongs to the neurotoxin 19 (CSTX) family. 01 subfamily. As to expression, expressed by the venom gland.

The protein resides in the secreted. The chain is U3-lycotoxin-Ls1j from Lycosa singoriensis (Wolf spider).